The primary structure comprises 219 residues: Octanoyltransferase (219 aa).

Residues 32–207 form the BPL/LPL catalytic domain; the sequence is ADSGDEIWLL…HLVRQLGYAQ (176 aa). Residues 71–78, 138–140, and 151–153 each bind substrate; these read RGGQVTYH, SLG, and GLA. The active-site Acyl-thioester intermediate is the cysteine 169.

This sequence belongs to the LipB family.

The protein resides in the cytoplasm. The catalysed reaction is octanoyl-[ACP] + L-lysyl-[protein] = N(6)-octanoyl-L-lysyl-[protein] + holo-[ACP] + H(+). It functions in the pathway protein modification; protein lipoylation via endogenous pathway; protein N(6)-(lipoyl)lysine from octanoyl-[acyl-carrier-protein]: step 1/2. Its function is as follows. Catalyzes the transfer of endogenously produced octanoic acid from octanoyl-acyl-carrier-protein onto the lipoyl domains of lipoate-dependent enzymes. Lipoyl-ACP can also act as a substrate although octanoyl-ACP is likely to be the physiological substrate. This chain is Octanoyltransferase, found in Stutzerimonas stutzeri (strain A1501) (Pseudomonas stutzeri).